The sequence spans 541 residues: Membrane protein insertase YidC (541 aa).

6 helical membrane-spanning segments follow: residues 6–26, 325–345, 349–369, 420–440, 457–477, and 500–520; these read NILLIGLLFVSFLLWQQWQAD, LVVDYGFLWWLAVPIHWLLMF, FVGNWGMAIILITLTVRGLLF, GGCLPIILQMPIFIALYWVLL, LSVQDPYYILPLLMGVSMFVM, and VIFTVFFLWFPAGLVLYWLVG.

This sequence belongs to the OXA1/ALB3/YidC family. Type 1 subfamily. As to quaternary structure, interacts with the Sec translocase complex via SecD. Specifically interacts with transmembrane segments of nascent integral membrane proteins during membrane integration.

It localises to the cell inner membrane. Functionally, required for the insertion and/or proper folding and/or complex formation of integral membrane proteins into the membrane. Involved in integration of membrane proteins that insert both dependently and independently of the Sec translocase complex, as well as at least some lipoproteins. Aids folding of multispanning membrane proteins. The sequence is that of Membrane protein insertase YidC from Shewanella baltica (strain OS223).